We begin with the raw amino-acid sequence, 195 residues long: NADH-quinone oxidoreductase subunit B (195 aa).

4 residues coordinate [4Fe-4S] cluster: Cys74, Cys75, Cys139, and Cys169.

This sequence belongs to the complex I 20 kDa subunit family. NDH-1 is composed of 14 different subunits. Subunits NuoB, C, D, E, F, and G constitute the peripheral sector of the complex. [4Fe-4S] cluster is required as a cofactor.

It localises to the cell inner membrane. It carries out the reaction a quinone + NADH + 5 H(+)(in) = a quinol + NAD(+) + 4 H(+)(out). In terms of biological role, NDH-1 shuttles electrons from NADH, via FMN and iron-sulfur (Fe-S) centers, to quinones in the respiratory chain. The immediate electron acceptor for the enzyme in this species is believed to be ubiquinone. Couples the redox reaction to proton translocation (for every two electrons transferred, four hydrogen ions are translocated across the cytoplasmic membrane), and thus conserves the redox energy in a proton gradient. The protein is NADH-quinone oxidoreductase subunit B of Methylobacterium radiotolerans (strain ATCC 27329 / DSM 1819 / JCM 2831 / NBRC 15690 / NCIMB 10815 / 0-1).